A 212-amino-acid polypeptide reads, in one-letter code: Adenine phosphoribosyltransferase (212 aa).

The protein belongs to the purine/pyrimidine phosphoribosyltransferase family. In terms of assembly, homodimer.

The protein localises to the cytoplasm. It catalyses the reaction AMP + diphosphate = 5-phospho-alpha-D-ribose 1-diphosphate + adenine. It participates in purine metabolism; AMP biosynthesis via salvage pathway; AMP from adenine: step 1/1. Its function is as follows. Catalyzes a salvage reaction resulting in the formation of AMP, that is energically less costly than de novo synthesis. This Mycobacterium tuberculosis (strain ATCC 25618 / H37Rv) protein is Adenine phosphoribosyltransferase.